Consider the following 222-residue polypeptide: Small ribosomal subunit protein uS3 (222 aa).

The 69-residue stretch at 39-107 folds into the KH type-2 domain; it reads VREFLHKKLA…PVQINIEEVR (69 aa).

It belongs to the universal ribosomal protein uS3 family. Part of the 30S ribosomal subunit. Forms a tight complex with proteins S10 and S14.

Its function is as follows. Binds the lower part of the 30S subunit head. Binds mRNA in the 70S ribosome, positioning it for translation. The protein is Small ribosomal subunit protein uS3 of Francisella tularensis subsp. tularensis (strain FSC 198).